Here is a 269-residue protein sequence, read N- to C-terminus: 4-hydroxy-tetrahydrodipicolinate reductase (269 aa).

Gly9–Met14 contributes to the NAD(+) binding site. Arg36 contacts NADP(+). Residues Gly99–Thr101 and Ala123–Met126 each bind NAD(+). The Proton donor/acceptor role is filled by His156. His157 is a (S)-2,3,4,5-tetrahydrodipicolinate binding site. Lys160 acts as the Proton donor in catalysis. Gly166 to Thr167 contributes to the (S)-2,3,4,5-tetrahydrodipicolinate binding site.

It belongs to the DapB family.

It localises to the cytoplasm. The enzyme catalyses (S)-2,3,4,5-tetrahydrodipicolinate + NAD(+) + H2O = (2S,4S)-4-hydroxy-2,3,4,5-tetrahydrodipicolinate + NADH + H(+). It catalyses the reaction (S)-2,3,4,5-tetrahydrodipicolinate + NADP(+) + H2O = (2S,4S)-4-hydroxy-2,3,4,5-tetrahydrodipicolinate + NADPH + H(+). It participates in amino-acid biosynthesis; L-lysine biosynthesis via DAP pathway; (S)-tetrahydrodipicolinate from L-aspartate: step 4/4. Its function is as follows. Catalyzes the conversion of 4-hydroxy-tetrahydrodipicolinate (HTPA) to tetrahydrodipicolinate. This Methylococcus capsulatus (strain ATCC 33009 / NCIMB 11132 / Bath) protein is 4-hydroxy-tetrahydrodipicolinate reductase.